We begin with the raw amino-acid sequence, 135 residues long: uncharacterized protein (135 aa).

Residues 1–70 (MKPDWPRRGA…RWRPQGTGTG (70 aa)) form a disordered region.

This is an uncharacterized protein from Homo sapiens (Human).